Consider the following 440-residue polypeptide: Chromosomal replication initiator protein DnaA (440 aa).

The segment at 1-93 (MNVQLNEIWN…QTPVKPVAQE (93 aa)) is domain I, interacts with DnaA modulators. Residues 94-101 (YTEDSNMS) are domain II. Residues 102–318 (FLNPKYTFDT…GALNRVIAYS (217 aa)) form a domain III, AAA+ region region. Positions 146, 148, 149, and 150 each coordinate ATP. Positions 319 to 440 (TLTENIINVD…EEIKKNITGG (122 aa)) are domain IV, binds dsDNA.

This sequence belongs to the DnaA family. Oligomerizes as a right-handed, spiral filament on DNA at oriC.

It is found in the cytoplasm. Plays an essential role in the initiation and regulation of chromosomal replication. ATP-DnaA binds to the origin of replication (oriC) to initiate formation of the DNA replication initiation complex once per cell cycle. Binds the DnaA box (a 9 base pair repeat at the origin) and separates the double-stranded (ds)DNA. Forms a right-handed helical filament on oriC DNA; dsDNA binds to the exterior of the filament while single-stranded (ss)DNA is stabiized in the filament's interior. The ATP-DnaA-oriC complex binds and stabilizes one strand of the AT-rich DNA unwinding element (DUE), permitting loading of DNA polymerase. After initiation quickly degrades to an ADP-DnaA complex that is not apt for DNA replication. Binds acidic phospholipids. The chain is Chromosomal replication initiator protein DnaA from Ruminiclostridium cellulolyticum (strain ATCC 35319 / DSM 5812 / JCM 6584 / H10) (Clostridium cellulolyticum).